Reading from the N-terminus, the 392-residue chain is Formate-dependent phosphoribosylglycinamide formyltransferase (392 aa).

N(1)-(5-phospho-beta-D-ribosyl)glycinamide contacts are provided by residues 22–23 (EL) and E82. ATP contacts are provided by residues R114, K155, 160–165 (SSGKGQ), 195–198 (EGVV), and E203. In terms of domain architecture, ATP-grasp spans 119 to 308 (RLAAEELQLP…EFALHVRAFL (190 aa)). Mg(2+) contacts are provided by E267 and E279. N(1)-(5-phospho-beta-D-ribosyl)glycinamide is bound by residues D286, K355, and 362 to 363 (RR).

This sequence belongs to the PurK/PurT family. In terms of assembly, homodimer.

It catalyses the reaction N(1)-(5-phospho-beta-D-ribosyl)glycinamide + formate + ATP = N(2)-formyl-N(1)-(5-phospho-beta-D-ribosyl)glycinamide + ADP + phosphate + H(+). Its pathway is purine metabolism; IMP biosynthesis via de novo pathway; N(2)-formyl-N(1)-(5-phospho-D-ribosyl)glycinamide from N(1)-(5-phospho-D-ribosyl)glycinamide (formate route): step 1/1. Involved in the de novo purine biosynthesis. Catalyzes the transfer of formate to 5-phospho-ribosyl-glycinamide (GAR), producing 5-phospho-ribosyl-N-formylglycinamide (FGAR). Formate is provided by PurU via hydrolysis of 10-formyl-tetrahydrofolate. The polypeptide is Formate-dependent phosphoribosylglycinamide formyltransferase (Escherichia coli O1:K1 / APEC).